The primary structure comprises 740 residues: Catalase-peroxidase (740 aa).

The segment at residues 102–229 (WHAAGTYRTG…LAAIQMGLIY (128 aa)) is a cross-link (tryptophyl-tyrosyl-methioninium (Trp-Tyr) (with M-256)). Residue His103 is the Proton acceptor of the active site. The segment at 111 to 130 (GDGRGGSSSGQQRFAPLNSW) is disordered. Positions 229-256 (YVNPEGPGGDPHDPEGMARDMRETFARM) form a cross-link, tryptophyl-tyrosyl-methioninium (Tyr-Met) (with W-102). His271 serves as a coordination point for heme b.

Belongs to the peroxidase family. Peroxidase/catalase subfamily. In terms of assembly, homodimer or homotetramer. It depends on heme b as a cofactor. Post-translationally, formation of the three residue Trp-Tyr-Met cross-link is important for the catalase, but not the peroxidase activity of the enzyme.

It catalyses the reaction H2O2 + AH2 = A + 2 H2O. The catalysed reaction is 2 H2O2 = O2 + 2 H2O. In terms of biological role, bifunctional enzyme with both catalase and broad-spectrum peroxidase activity. This is Catalase-peroxidase from Erythrobacter litoralis (strain HTCC2594).